A 319-amino-acid chain; its full sequence is Taste receptor type 2 member 30 (319 aa).

Residue Met1 is a topological domain, extracellular. The helical transmembrane segment at 2-22 threads the bilayer; it reads ITFLPIIFSILIVVIFVIGNF. Over 23–46 the chain is Cytoplasmic; the sequence is ANGFIALVNSIEWVKRQKISFVDQ. The chain crosses the membrane as a helical span at residues 47-67; the sequence is ILTALAVSRVGLLWVLLLHWY. The Extracellular segment spans residues 68 to 86; sequence ATQLNPAFYSVEVRITAYN. Residues 87–107 traverse the membrane as a helical segment; it reads VWAVTNHFSSWLATSLSMFYL. Topologically, residues 108–126 are cytoplasmic; sequence LRIANFSNLIFLRIKRRVK. The chain crosses the membrane as a helical span at residues 127 to 147; sequence SVVLVILLGPLLFLVCHLFVI. At 148-178 the chain is on the extracellular side; that stretch reads NMDETVWTKEYEGNVTWKIKLRSAMYHSNMT. Residues Asn161 and Asn176 are each glycosylated (N-linked (GlcNAc...) asparagine). Residues 179–199 form a helical membrane-spanning segment; sequence LTMLANFVPLTLTLISFLLLI. Residues 200-229 are Cytoplasmic-facing; that stretch reads CSLCKHLKKMQLHGKGSQDPSTKVHIKALQ. Residues 230-250 traverse the membrane as a helical segment; that stretch reads TVTSFLLLCAIYFLSMIISVC. Residues 251–259 lie on the Extracellular side of the membrane; that stretch reads NFGRLEKQP. Residues 260–280 form a helical membrane-spanning segment; sequence VFMFCQAIIFSYPSTHPFILI. At 281–319 the chain is on the cytoplasmic side; the sequence is LGNKKLKQIFLSVLRHVRYWVKDRSLRLHRFTRGALCVF.

Belongs to the G-protein coupled receptor T2R family. Expressed in subsets of taste receptor cells of the tongue and exclusively in gustducin-positive cells.

Its subcellular location is the membrane. Functionally, receptor that may play a role in the perception of bitterness and is gustducin-linked. May play a role in sensing the chemical composition of the gastrointestinal content. The activity of this receptor may stimulate alpha gustducin, mediate PLC-beta-2 activation and lead to the gating of TRPM5. This chain is Taste receptor type 2 member 30 (TAS2R30), found in Homo sapiens (Human).